The primary structure comprises 282 residues: NADPH-dependent 7-cyano-7-deazaguanine reductase (282 aa).

88–90 contacts substrate; that stretch reads IES. 90–91 is an NADPH binding site; that stretch reads SK. Catalysis depends on Cys-190, which acts as the Thioimide intermediate. The active-site Proton donor is the Asp-197. 229–230 lines the substrate pocket; that stretch reads HE. Residue 258 to 259 participates in NADPH binding; that stretch reads RG.

Belongs to the GTP cyclohydrolase I family. QueF type 2 subfamily. Homodimer.

The protein localises to the cytoplasm. It catalyses the reaction 7-aminomethyl-7-carbaguanine + 2 NADP(+) = 7-cyano-7-deazaguanine + 2 NADPH + 3 H(+). It participates in tRNA modification; tRNA-queuosine biosynthesis. In terms of biological role, catalyzes the NADPH-dependent reduction of 7-cyano-7-deazaguanine (preQ0) to 7-aminomethyl-7-deazaguanine (preQ1). In Escherichia coli O9:H4 (strain HS), this protein is NADPH-dependent 7-cyano-7-deazaguanine reductase.